Consider the following 427-residue polypeptide: Endothelin-1 receptor (427 aa).

An N-terminal signal peptide occupies residues 1-20 (METFWLRLSFWVALVGGVIS). The Extracellular portion of the chain corresponds to 21-80 (DNPESYSTNLSIHVDSVATFHGTELSFVVTTHQPTNLALPSNGSMHNYCPQQTKITSAFK). N-linked (GlcNAc...) asparagine glycans are attached at residues Asn-29 and Asn-62. Residues 81-102 (YINTVISCTIFIVGMVGNATLL) traverse the membrane as a helical segment. At 103-112 (RIIYQNKCMR) the chain is on the cytoplasmic side. The helical transmembrane segment at 113-132 (NGPNALIASLALGDLIYVVI) threads the bilayer. Residues 133 to 159 (DLPINVFKLLAGRWPFEQNDFGVFLCK) lie on the Extracellular side of the membrane. Cys-158 and Cys-239 are joined by a disulfide. Residues 160–181 (LFPFLQKSSVGITVLNLCALSV) form a helical membrane-spanning segment. Over 182-205 (DRYRAVASWSRVQGIGIPLVTAIE) the chain is Cytoplasmic. The helical transmembrane segment at 206–229 (IVSIWILSFILAIPEAIGFVMVPF) threads the bilayer. Over 230–256 (EYKGAQHRTCMLNATSKFMEFYQDVKD) the chain is Extracellular. A helical transmembrane segment spans residues 257 to 278 (WWLFGFYFCMPLVCTAIFYTLM). Residues 279–306 (TCEMLNRRNGSLRIALSEHLKQRREVAK) lie on the Cytoplasmic side of the membrane. The helical transmembrane segment at 307–328 (TVFCLVVIFALCWFPLHLSRIL) threads the bilayer. The Extracellular portion of the chain corresponds to 329-347 (KKTVYDEMDTNRCELLSFL). The helical transmembrane segment at 348-372 (LLMDYIGINLATMNSCINPIALYFV) threads the bilayer. Topologically, residues 373–427 (SKKFKNCFQSCLCCCCYQSKSLMTSVPMNGTSIQWKNHEQNNHNTERSSHKDSIN) are cytoplasmic. Phosphoserine is present on Ser-425.

This sequence belongs to the G-protein coupled receptor 1 family. Endothelin receptor subfamily. EDNRA sub-subfamily. As to quaternary structure, interacts with HDAC7 and KAT5.

It localises to the cell membrane. Receptor for endothelin-1. Mediates its action by association with G proteins that activate a phosphatidylinositol-calcium second messenger system. The rank order of binding affinities for ET-A is: ET1 &gt; ET2 &gt;&gt; ET3. The chain is Endothelin-1 receptor from Bos taurus (Bovine).